The primary structure comprises 436 residues: N-lysine methyltransferase SMYD2 (436 aa).

The SET domain maps to 10–244 (GGLERFASPG…PGEEVFTSYI (235 aa)). An S-adenosyl-L-methionine-binding site is contributed by 20-22 (KGR). The Zn(2+) site is built by Cys55, Cys58, Cys68, Cys71, Cys77, Cys81, His89, and Cys93. The segment at 55–93 (CDGCFARKEGLSKCGRCKQAFYCNVECQKEDWPMHKLEC) adopts an MYND-type zinc-finger fold. Residues His140, 209–210 (NH), and 261–263 (YFF) contribute to the S-adenosyl-L-methionine site.

Belongs to the class V-like SAM-binding methyltransferase superfamily.

It is found in the cytoplasm. The protein localises to the cytosol. Its subcellular location is the nucleus. It carries out the reaction L-lysyl(4)-[histone H3] + 3 S-adenosyl-L-methionine = N(6),N(6),N(6)-trimethyl-L-lysyl(4)-[histone H3] + 3 S-adenosyl-L-homocysteine + 3 H(+). It catalyses the reaction L-lysyl-[protein] + S-adenosyl-L-methionine = N(6)-methyl-L-lysyl-[protein] + S-adenosyl-L-homocysteine + H(+). Functionally, protein-lysine N-methyltransferase that methylates both histones and non-histone proteins, including p53/TP53 and RB1. Specifically trimethylates histone H3 'Lys-4' (H3K4me3) in vivo. The activity requires interaction with HSP90alpha. Shows even higher methyltransferase activity on p53/TP53. Monomethylates 'Lys-370' of p53/TP53, leading to decreased DNA-binding activity and subsequent transcriptional regulation activity of p53/TP53. Monomethylates RB1 at 'Lys-860'. This is N-lysine methyltransferase SMYD2 (SMYD2) from Gallus gallus (Chicken).